The chain runs to 403 residues: Dual-specificity RNA methyltransferase RlmN (403 aa).

Catalysis depends on glutamate 126, which acts as the Proton acceptor. The Radical SAM core domain occupies 132 to 375; sequence ETDRGTLCVS…VRTPRGRDIL (244 aa). A disulfide bond links cysteine 139 and cysteine 378. [4Fe-4S] cluster contacts are provided by cysteine 146, cysteine 150, and cysteine 153. S-adenosyl-L-methionine-binding positions include 204-205, serine 236, 258-260, and asparagine 335; these read GE and SLH. Cysteine 378 (S-methylcysteine intermediate) is an active-site residue.

The protein belongs to the radical SAM superfamily. RlmN family. [4Fe-4S] cluster is required as a cofactor.

The protein resides in the cytoplasm. It catalyses the reaction adenosine(2503) in 23S rRNA + 2 reduced [2Fe-2S]-[ferredoxin] + 2 S-adenosyl-L-methionine = 2-methyladenosine(2503) in 23S rRNA + 5'-deoxyadenosine + L-methionine + 2 oxidized [2Fe-2S]-[ferredoxin] + S-adenosyl-L-homocysteine. The catalysed reaction is adenosine(37) in tRNA + 2 reduced [2Fe-2S]-[ferredoxin] + 2 S-adenosyl-L-methionine = 2-methyladenosine(37) in tRNA + 5'-deoxyadenosine + L-methionine + 2 oxidized [2Fe-2S]-[ferredoxin] + S-adenosyl-L-homocysteine. Specifically methylates position 2 of adenine 2503 in 23S rRNA and position 2 of adenine 37 in tRNAs. m2A2503 modification seems to play a crucial role in the proofreading step occurring at the peptidyl transferase center and thus would serve to optimize ribosomal fidelity. In Bradyrhizobium sp. (strain ORS 278), this protein is Dual-specificity RNA methyltransferase RlmN.